A 609-amino-acid polypeptide reads, in one-letter code: Adagio protein 1 (609 aa).

Over residues 1 to 17 the composition is skewed to low complexity; the sequence is MEWDSGSDLSADDASSL. Positions 1–24 are disordered; it reads MEWDSGSDLSADDASSLADDEEGG. Residues 32–114 form the PAS domain; sequence IPYPVGNLLH…SEIRKCIDEG (83 aa). The residue at position 82 (C82) is an S-4a-FMN cysteine. Residues 118–161 form the PAC domain; that stretch reads QGELLNFRKDGSPLMNRLRLTPIYGDDDTITHIIGIQFFIETDI. An F-box domain is found at 195-241; that stretch reads CGLFQLSDEVVSMKILSRLTPRDVASVSSVCRRLYVLTKNEDLWRRV. 5 Kelch repeats span residues 292-342, 345-392, 397-445, 450-501, and 516-564; these read SRCN…SSPP, RWGH…SGLA, RSWH…PAAW, RLGH…TGSG, and RLDH…NIPG.

Belongs to the ADAGIO family. As to quaternary structure, interacts with NFXL2. Interacts (via N-terminus) with GI and (via Kelch repeats) with ADO3. Component of an E3 ubiquitin ligase SCF(ADO1) complex composed of SKP1A/ASK1 (or SKP1B/ASK2), CUL1, RBX1 and ADO1. Also interacts with SKP1D/ASK4, SKP1K/ASK11, CRY1, PHYB, APRR1 and APRR5, and probably with SKP1N/ASK14 and SKP1S/ASK19. May be ubiquitinated. Degraded in a proteasome-dependent manner. Post-translationally, FMN binds covalently to cysteine after exposure to blue light and is reversed in the dark. Ubiquitously expressed with higher levels in cotyledons and leaves.

The protein localises to the nucleus. It is found in the cytoplasm. Its pathway is protein modification; protein ubiquitination. Functionally, component of an E3 ubiquitin ligase complex that plays a central role in blue light-dependent circadian cycles. Acts as a blue light photoreceptor, due to the presence of FMN, that mediates light-regulated protein degradation of critical clock components by targeting them to the proteasome complex. The SCF(ADO1) E3 ubiquitin ligase complex is involved in the regulation of circadian clock-dependent processes including the transition to flowering time, hypocotyl elongation, cotyledons and leaf movement rhythms. APRR1/TOC1 and APRR5, but not 'GIGANTEA', are proteolytic substrates of this ubiquitin ligase complex. Blue light enhances cooperative stabilization of 'GIGANTEA' and ADO1/ZTL, leading to amplification and sharpening of the expression profile of APRR1/TOC1. ADO1/ZTL interacts with ADO3, preventing the interaction of ADO3 with CDF1. This chain is Adagio protein 1 (ADO1), found in Arabidopsis thaliana (Mouse-ear cress).